Reading from the N-terminus, the 204-residue chain is N-(5'-phosphoribosyl)anthranilate isomerase (204 aa).

This sequence belongs to the TrpF family.

It catalyses the reaction N-(5-phospho-beta-D-ribosyl)anthranilate = 1-(2-carboxyphenylamino)-1-deoxy-D-ribulose 5-phosphate. The protein operates within amino-acid biosynthesis; L-tryptophan biosynthesis; L-tryptophan from chorismate: step 3/5. The protein is N-(5'-phosphoribosyl)anthranilate isomerase of Bacillus anthracis (strain A0248).